Here is a 442-residue protein sequence, read N- to C-terminus: Ribosomal protein uS12 methylthiotransferase RimO (442 aa).

The MTTase N-terminal domain maps to 8–118 (PKVGFVSLGC…VLGHVHKYVE (111 aa)). The [4Fe-4S] cluster site is built by C17, C53, C82, C150, C154, and C157. The Radical SAM core domain maps to 136–373 (LTPRHYAYLK…MELQQQVSIR (238 aa)). Residues 376–442 (ARKVGKEMLV…EYDLWASLID (67 aa)) form the TRAM domain.

The protein belongs to the methylthiotransferase family. RimO subfamily. [4Fe-4S] cluster is required as a cofactor.

The protein resides in the cytoplasm. It catalyses the reaction L-aspartate(89)-[ribosomal protein uS12]-hydrogen + (sulfur carrier)-SH + AH2 + 2 S-adenosyl-L-methionine = 3-methylsulfanyl-L-aspartate(89)-[ribosomal protein uS12]-hydrogen + (sulfur carrier)-H + 5'-deoxyadenosine + L-methionine + A + S-adenosyl-L-homocysteine + 2 H(+). Catalyzes the methylthiolation of an aspartic acid residue of ribosomal protein uS12. This is Ribosomal protein uS12 methylthiotransferase RimO from Aeromonas hydrophila subsp. hydrophila (strain ATCC 7966 / DSM 30187 / BCRC 13018 / CCUG 14551 / JCM 1027 / KCTC 2358 / NCIMB 9240 / NCTC 8049).